Consider the following 139-residue polypeptide: Low molecular weight protein-tyrosine-phosphatase PtpB (139 aa).

Residue Cys7 is the Nucleophile of the active site. The active site involves Arg13. Residue Asp111 is the Proton donor of the active site.

This sequence belongs to the low molecular weight phosphotyrosine protein phosphatase family.

The catalysed reaction is O-phospho-L-tyrosyl-[protein] + H2O = L-tyrosyl-[protein] + phosphate. Functionally, dephosphorylates the phosphotyrosine-containing proteins. The chain is Low molecular weight protein-tyrosine-phosphatase PtpB (ptpB) from Staphylococcus epidermidis (strain ATCC 35984 / DSM 28319 / BCRC 17069 / CCUG 31568 / BM 3577 / RP62A).